Consider the following 254-residue polypeptide: Urease accessory protein UreF (254 aa).

Positions 1 to 11 are enriched in basic and acidic residues; sequence MDKGKSVKSTE. The disordered stretch occupies residues 1 to 26; sequence MDKGKSVKSTEKSVGMPPKTPKTDNN.

It belongs to the UreF family. UreH, UreF and UreG form a complex that acts as a GTP-hydrolysis-dependent molecular chaperone, activating the urease apoprotein by helping to assemble the nickel containing metallocenter of UreC. The UreE protein probably delivers the nickel.

Its subcellular location is the cytoplasm. Functionally, required for maturation of urease via the functional incorporation of the urease nickel metallocenter. This Helicobacter pylori (strain ATCC 700392 / 26695) (Campylobacter pylori) protein is Urease accessory protein UreF.